The sequence spans 225 residues: PKHD-type hydroxylase YbiX (225 aa).

Residues 78–177 (TLSTPLFNRY…RVASFMWIQS (100 aa)) form the Fe2OG dioxygenase domain. Residues histidine 96, aspartate 98, and histidine 158 each coordinate Fe cation. Residue arginine 168 participates in 2-oxoglutarate binding.

The cofactor is Fe(2+). L-ascorbate serves as cofactor.

This Escherichia coli (strain K12 / DH10B) protein is PKHD-type hydroxylase YbiX.